We begin with the raw amino-acid sequence, 64 residues long: Large ribosomal subunit protein uL29 (64 aa).

It belongs to the universal ribosomal protein uL29 family.

The chain is Large ribosomal subunit protein uL29 from Ralstonia pickettii (strain 12J).